Here is a 353-residue protein sequence, read N- to C-terminus: MSKNKLSKGQQRRVKANHQRRLKTTAEKADYDDNLFGETSEGIVISRFGMHADVESADGSVHRCNIRRTIRSLVTGDRVVWRPGKDAADGVSVKGIVEAVHDRASVLTRPDFYDGVKPIAANIDQIVVVSAILPELSLNIIDRYLVACEAQDIEPLIVLNKIDLLDDDGLRFVNEQMDIYRNIGYRVLLVSSRTQDGLKPLEAALTDRISIFAGQSGVGKSSLLNALLGLSEDQILTNDVSDVSGLGQHTTTAARLYHFPHGGDVIDSPGVREFGLWHLEAEQITNGFVEFHDYLGRCKYRDCKHDTDPGCALREAVENGKIAESRFENYHRILESMAQVQVKTRKNFSSSDD.

The segment at 1–24 is disordered; the sequence is MSKNKLSKGQQRRVKANHQRRLKT. The span at 10–23 shows a compositional bias: basic residues; sequence QQRRVKANHQRRLK. In terms of domain architecture, CP-type G spans 104 to 274; the sequence is ASVLTRPDFY…VIDSPGVREF (171 aa). GTP contacts are provided by residues 160–163 and 214–222; these read NKID and GQSGVGKSS. The Zn(2+) site is built by cysteine 298, cysteine 303, histidine 305, and cysteine 311.

It belongs to the TRAFAC class YlqF/YawG GTPase family. RsgA subfamily. Monomer. Associates with 30S ribosomal subunit, binds 16S rRNA. It depends on Zn(2+) as a cofactor.

The protein resides in the cytoplasm. Functionally, one of several proteins that assist in the late maturation steps of the functional core of the 30S ribosomal subunit. Helps release RbfA from mature subunits. May play a role in the assembly of ribosomal proteins into the subunit. Circularly permuted GTPase that catalyzes slow GTP hydrolysis, GTPase activity is stimulated by the 30S ribosomal subunit. The protein is Small ribosomal subunit biogenesis GTPase RsgA of Klebsiella pneumoniae subsp. pneumoniae (strain ATCC 700721 / MGH 78578).